The chain runs to 650 residues: Putative polypeptide N-acetylgalactosaminyltransferase 9 (650 aa).

Residues 1–11 lie on the Cytoplasmic side of the membrane; it reads MAFIWRRRSTT. Residues 12 to 31 traverse the membrane as a helical; Signal-anchor for type II membrane protein segment; that stretch reads IVKLVAFALAIWFCIAFLVY. Residues 32–650 lie on the Lumenal side of the membrane; the sequence is TDDTRRRAAQ…TLENYDSSKL (619 aa). A disordered region spans residues 84–154; the sequence is NVIGGGGQKQ…NPGELGKPVR (71 aa). Basic and acidic residues predominate over residues 107–136; that stretch reads HKADLQAERMRKKAAEQPKKKPQEDSKKVI. Disulfide bonds link Cys-198–Cys-432, Cys-423–Cys-499, Cys-535–Cys-554, Cys-577–Cys-590, and Cys-616–Cys-631. Residues 208-317 are catalytic subdomain A; sequence LPKTDVIICF…EGWLEPLLDR (110 aa). Substrate is bound by residues Cys-216, Asp-249, and Arg-278. Mn(2+) is bound at residue Asp-301. Substrate is bound by residues Ser-302 and His-303. His-303 lines the Mn(2+) pocket. N-linked (GlcNAc...) asparagine glycosylation is found at Asn-321 and Asn-373. The catalytic subdomain B stretch occupies residues 378–440; sequence PVYSPTMAGG…PCSHVGHIFR (63 aa). His-437 contacts Mn(2+). 2 residues coordinate substrate: Arg-440 and Tyr-445. One can recognise a Ricin B-type lectin domain in the interval 521 to 643; that stretch reads AHGEIRNLGY…SLSRQQWTLE (123 aa).

It belongs to the glycosyltransferase 2 family. GalNAc-T subfamily. Isoform A forms homotetramer. Isoform B forms homodimer. Mn(2+) is required as a cofactor.

The protein localises to the golgi apparatus membrane. The catalysed reaction is L-seryl-[protein] + UDP-N-acetyl-alpha-D-galactosamine = a 3-O-[N-acetyl-alpha-D-galactosaminyl]-L-seryl-[protein] + UDP + H(+). The enzyme catalyses L-threonyl-[protein] + UDP-N-acetyl-alpha-D-galactosamine = a 3-O-[N-acetyl-alpha-D-galactosaminyl]-L-threonyl-[protein] + UDP + H(+). The protein operates within protein modification; protein glycosylation. Its function is as follows. Catalyzes the initial reaction in O-linked oligosaccharide biosynthesis, the transfer of an N-acetyl-D-galactosamine residue to a serine or threonine residue on the protein receptor. It can both act as a peptide transferase that transfers GalNAc onto unmodified peptide substrates, and as a glycopeptide transferase that requires the prior addition of a GalNAc on a peptide before adding additional GalNAc moieties. In terms of biological role, N-acetylgalactosaminyltransferase which preferentially O-glycosylates negatively charge substrates. O-glycosylates mucin-like protein Sgs3 in the salivary gland but to a lesser extent than isoform B. By regulating the O-glycosylation of secretory cargo proteins plays a role in the morphology and maturation of salivary gland secretory granules. Functionally, N-acetylgalactosaminyltransferase which preferentially O-glycosylates positively charge substrates. O-glycosylates mucin-like protein Sgs3 in the salivary gland. By regulating the O-glycosylation of secretory cargo proteins, plays a role in the morphology and maturation of salivary gland secretory granules. This is Putative polypeptide N-acetylgalactosaminyltransferase 9 from Drosophila melanogaster (Fruit fly).